The chain runs to 101 residues: Small ribosomal subunit protein uS14 (101 aa).

Belongs to the universal ribosomal protein uS14 family. Part of the 30S ribosomal subunit. Contacts proteins S3 and S10.

Functionally, binds 16S rRNA, required for the assembly of 30S particles and may also be responsible for determining the conformation of the 16S rRNA at the A site. The protein is Small ribosomal subunit protein uS14 of Methylobacterium sp. (strain 4-46).